We begin with the raw amino-acid sequence, 917 residues long: Bifunctional aspartokinase/homoserine dehydrogenase 2, chloroplastic (917 aa).

The transit peptide at 1 to 89 (MQGLAVSCQL…EVNTYLPKGD (89 aa)) directs the protein to the chloroplast. The tract at residues 90 to 338 (MWSVHKFGGT…VSEAVILSTL (249 aa)) is aspartokinase. Positions 339 to 563 (SYQEAWEMSY…LSKTTLAVGI (225 aa)) are interface. ACT domains follow at residues 413-488 (VEGT…VING) and 494-571 (AVGL…LIGG). The tract at residues 564–917 (IGPGLIGGAL…RLASYLGAPS (354 aa)) is homoserine dehydrogenase. NAD(+)-binding residues include Ile-569 and Thr-650. NADP(+)-binding residues include Ile-569, Thr-650, and Lys-674. Ile-569, Thr-650, and Lys-674 together coordinate NADPH. 4 residues coordinate Na(+): Glu-701, Val-704, Ala-706, and Leu-708. 2 residues coordinate NADP(+): Gly-759 and Glu-762. L-homoserine is bound by residues Glu-762 and Asp-773. Lys-777 functions as the Proton donor in the catalytic mechanism. Gly-894 contributes to the NAD(+) binding site. An NADP(+)-binding site is contributed by Gly-894. Gly-894 is an NADPH binding site.

In the N-terminal section; belongs to the aspartokinase family. This sequence in the C-terminal section; belongs to the homoserine dehydrogenase family. Homo- or heterodimer. A metal cation is required as a cofactor.

The protein localises to the plastid. It is found in the chloroplast. The catalysed reaction is L-homoserine + NADP(+) = L-aspartate 4-semialdehyde + NADPH + H(+). It carries out the reaction L-homoserine + NAD(+) = L-aspartate 4-semialdehyde + NADH + H(+). The enzyme catalyses L-aspartate + ATP = 4-phospho-L-aspartate + ADP. The protein operates within amino-acid biosynthesis; L-lysine biosynthesis via DAP pathway; (S)-tetrahydrodipicolinate from L-aspartate: step 1/4. Its pathway is amino-acid biosynthesis; L-methionine biosynthesis via de novo pathway; L-homoserine from L-aspartate: step 1/3. It functions in the pathway amino-acid biosynthesis; L-methionine biosynthesis via de novo pathway; L-homoserine from L-aspartate: step 3/3. It participates in amino-acid biosynthesis; L-threonine biosynthesis; L-threonine from L-aspartate: step 1/5. The protein operates within amino-acid biosynthesis; L-threonine biosynthesis; L-threonine from L-aspartate: step 3/5. Functionally, bifunctional aspartate kinase and homoserine dehydrogenase that catalyzes the first and the third steps toward the synthesis of lysine, methionine and threonine from aspartate. In Zea mays (Maize), this protein is Bifunctional aspartokinase/homoserine dehydrogenase 2, chloroplastic (AKHSDH2).